Reading from the N-terminus, the 1052-residue chain is Carboxylic acid reductase (1052 aa).

Positions 21–344 (RALNEPNREW…ATEFTPFPFY (324 aa)) are adenylation (A) domain. AMP is bound by residues 334–335 (SA), Thr-339, and 419–422 (YQGR). Positions 560–643 (SSSDALIVSI…RLADYLLSIV (84 aa)) constitute a Carrier domain. Ser-595 carries the post-translational modification O-(pantetheine 4'-phosphoryl)serine. Positions 684–979 (GQVVVITGTT…QKIVPLDEWL (296 aa)) are carboxylic acid reductase (R) domain. Residues 693–696 (TGGI), Arg-718, 774–776 (NQW), Ser-814, Tyr-844, and Lys-848 contribute to the NADP(+) site.

It belongs to the adenylate-forming reductase family. The cofactor is Mg(2+).

The catalysed reaction is an aromatic aldehyde + AMP + diphosphate + NADP(+) = an aromatic carboxylate + ATP + NADPH + H(+). It catalyses the reaction a carboxylate + ATP + NADPH + H(+) = an aldehyde + AMP + diphosphate + NADP(+). It carries out the reaction benzoate + ATP + NADPH + H(+) = benzaldehyde + AMP + diphosphate + NADP(+). The enzyme catalyses (E)-cinnamate + ATP + NADPH + H(+) = (E)-cinnamaldehyde + AMP + diphosphate + NADP(+). The catalysed reaction is piperonylate + ATP + NADPH + H(+) = piperonal + AMP + diphosphate + NADP(+). It catalyses the reaction salicylate + ATP + NADPH + H(+) = salicylaldehyde + AMP + diphosphate + NADP(+). It carries out the reaction 3-hydroxybenzoate + ATP + NADPH + H(+) = 3-hydroxybenzaldehyde + AMP + diphosphate + NADP(+). The enzyme catalyses 2-methoxybenzoate + ATP + NADPH + H(+) = 2-methoxybenzaldehyde + AMP + diphosphate + NADP(+). The catalysed reaction is 3-methoxybenzoate + ATP + NADPH + H(+) = 3-methoxybenzaldehyde + AMP + diphosphate + NADP(+). It catalyses the reaction 4-hydroxybenzoate + ATP + NADPH + H(+) = 4-hydroxybenzaldehyde + AMP + diphosphate + NADP(+). It carries out the reaction 4-methoxybenzoate + ATP + NADPH + H(+) = 4-methoxybenzaldehyde + AMP + diphosphate + NADP(+). The enzyme catalyses 3-phenylpropanoate + ATP + NADPH + H(+) = 3-phenylpropanal + AMP + diphosphate + NADP(+). The catalysed reaction is picolinate + ATP + NADPH + H(+) = picolinal + AMP + diphosphate + NADP(+). It catalyses the reaction propanoate + ATP + NADPH + H(+) = propanal + AMP + diphosphate + NADP(+). It carries out the reaction butanoate + ATP + NADPH + H(+) = butanal + AMP + diphosphate + NADP(+). The enzyme catalyses pentanoate + ATP + NADPH + H(+) = pentanal + AMP + diphosphate + NADP(+). The catalysed reaction is hexanoate + ATP + NADPH + H(+) = hexanal + AMP + diphosphate + NADP(+). It catalyses the reaction heptanoate + ATP + NADPH + H(+) = heptanal + AMP + diphosphate + NADP(+). It carries out the reaction octanoate + ATP + NADPH + H(+) = octanal + AMP + diphosphate + NADP(+). The enzyme catalyses nonanoate + ATP + NADPH + H(+) = nonanal + AMP + diphosphate + NADP(+). Carboxylic acid reductase that shows a broad range of substrate specificity towards aromatic acids, especially to phenyl carboxylic and phenyl acrylic acids, to convert them into their respective aldehydes. Also able to use aliphatic acids as substrates. The polypeptide is Carboxylic acid reductase (Neurospora crassa (strain ATCC 24698 / 74-OR23-1A / CBS 708.71 / DSM 1257 / FGSC 987)).